A 1012-amino-acid polypeptide reads, in one-letter code: Structural polyprotein (1012 aa).

An a divalent metal cation-binding site is contributed by Asp-30. In terms of domain architecture, Peptidase S50 spans 513–755 (ADKGYEVVAN…AGRQYDLAMA (243 aa)). Ser-652 (nucleophile) is an active-site residue. Lys-692 is an active-site residue. The segment at 971–1012 (EMKHRNPRRAPPKPKPKPNVPTQRPPGRLGRWIRAVSDEDLE) is disordered. The span at 975 to 986 (RNPRRAPPKPKP) shows a compositional bias: basic residues. The interval 1003 to 1012 (IRAVSDEDLE) is interaction with VP1 protein.

Homotrimer. A central divalent metal stabilizes the VP2 trimer. Interacts with host ITGA4/ITGB1. In terms of assembly, homodimer. Interacts (via C-terminus) with VP1 in the cytoplasm. Interacts with VP2. In terms of processing, specific enzymatic cleavages yield mature proteins. The capsid assembly seems to be regulated by polyprotein processing. The protease VP4 cleaves itself off the polyprotein, thus releasing pre-VP2 and VP3 within the infected cell. During capsid assembly, the C-terminus of pre-VP2 is further processed by VP4, giving rise to VP2, the external capsid protein and three small peptides that all stay closely associated with the capsid.

Its subcellular location is the virion. It is found in the host cytoplasm. In terms of biological role, capsid protein VP2 self assembles to form an icosahedral capsid with a T=13 symmetry, about 70 nm in diameter, and consisting of 260 VP2 trimers. The capsid encapsulates the genomic dsRNA. VP2 is also involved in attachment and entry into the host cell by interacting with host ITGA4/ITGB1. Functionally, the precursor of VP2 plays an important role in capsid assembly. First, pre-VP2 and VP2 oligomers assemble to form a procapsid. Then, the pre-VP2 intermediates may be processed into VP2 proteins by proteolytic cleavage mediated by VP4 to obtain the mature virion. The final capsid is composed of pentamers and hexamers but VP2 has a natural tendency to assemble into all-pentameric structures. Therefore pre-VP2 may be required to allow formation of the hexameric structures. Its function is as follows. Protease VP4 is a serine protease that cleaves the polyprotein into its final products. Pre-VP2 is first partially cleaved, and may be completely processed by VP4 upon capsid maturation. Capsid protein VP3 plays a key role in virion assembly by providing a scaffold for the capsid made of VP2. May self-assemble to form a T=4-like icosahedral inner-capsid composed of at least 180 trimers. Plays a role in genomic RNA packaging by recruiting VP1 into the capsid and interacting with the dsRNA genome segments to form a ribonucleoprotein complex. Additionally, the interaction of the VP3 C-terminal tail with VP1 removes the inherent structural blockade of the polymerase active site. Thus, VP3 can also function as a transcriptional activator. In terms of biological role, structural peptide 1 is a small peptide derived from pre-VP2 C-terminus. It destabilizes and perforates cell membranes, suggesting a role during entry. Functionally, structural peptide 2 is a small peptide derived from pre-VP2 C-terminus. It is not essential for the virus viability, but viral growth is affected when missing. Its function is as follows. Structural peptide 3 is a small peptide derived from pre-VP2 C-terminus. It is not essential for the virus viability, but viral growth is affected when missing. In Avian infectious bursal disease virus (isolate Chicken/UK/UK661/1989) (IBDV), this protein is Structural polyprotein.